Reading from the N-terminus, the 1487-residue chain is Collagen alpha-1(II) chain (1487 aa).

Positions 1-25 (MIRLGAPQTLVLLTLLVAAVLRCHG) are cleaved as a signal peptide. The propeptide at 26 to 181 (QDVQKAGSCV…PPGLGGNFAA (156 aa)) is N-terminal propeptide. The VWFC domain occupies 32–90 (GSCVQDGQRYNDKDVWKPEPCRICVCDTGTVLCDDIICEDMKDCLSPETPFGECCPICS). The segment at 96–1234 (ASGQPGPKGQ…GLGQREKGPD (1139 aa)) is disordered. Composition is skewed to basic and acidic residues over residues 105 to 116 (QKGEPGDIKDIV) and 133 to 154 (PRGD…RDGE). A compositionally biased stretch (pro residues) spans 158-173 (PGNPGPPGPPGPPGPP). A 5-hydroxylysine modification is found at Lys190. O-linked (Gal...) hydroxylysine glycosylation occurs at Lys190. Over residues 192-203 (GGAQMGVMQGPM) the composition is skewed to low complexity. The tract at residues 201 to 1214 (GPMGPMGPRG…PGPPGPPGPP (1014 aa)) is triple-helical region. A compositionally biased stretch (pro residues) spans 208–217 (PRGPPGPAGA). Hydroxyproline is present on residues Pro212, Pro218, Pro230, Pro233, Pro245, Pro248, Pro251, Pro260, Pro269, Pro278, Pro281, and Pro284. Low complexity predominate over residues 218 to 239 (PGPQGFQGNPGEPGEPGVSGPM). The segment covering 241-250 (PRGPPGPPGK) has biased composition (pro residues). Residues 251 to 265 (PGDDGEAGKPGKSGE) show a composition bias toward basic and acidic residues. Residue Lys287 is modified to 5-hydroxylysine. Lys287 carries an O-linked (Gal...) hydroxylysine glycan. Residue Pro293 is modified to Hydroxyproline. 5-hydroxylysine is present on Lys299. The O-linked (Gal...) hydroxylysine glycan is linked to Lys299. Pro305 is modified (hydroxyproline). Lys308 is modified (5-hydroxylysine). Lys308 is a glycosylation site (O-linked (Gal...) hydroxylysine). Residues 310 to 320 (ESGSPGENGSP) are compositionally biased toward low complexity. A hydroxyproline mark is found at Pro314, Pro320, Pro329, Pro350, Pro356, Pro365, Pro368, and Pro371. The segment covering 335–350 (TGPAGAAGARGNDGQP) has biased composition (low complexity). A compositionally biased stretch (gly residues) spans 360–369 (GPAGGPGFPG). Low complexity-rich tracts occupy residues 370-382 (APGA…PTGA) and 391-431 (PRGE…AGAP). 5-hydroxylysine is present on Lys374. An O-linked (Gal...) hydroxylysine glycan is attached at Lys374. Hydroxyproline is present on residues Pro395, Pro398, Pro401, Pro410, and Pro416. Lys419 carries the post-translational modification 5-hydroxylysine. Hydroxyproline is present on residues Pro425, Pro431, Pro434, and Pro440. The segment covering 433–442 (FPGPRGPPGP) has biased composition (pro residues). 5-hydroxylysine is present on Lys452. Pro458 bears the Hydroxyproline mark. 5-hydroxylysine is present on residues Lys464 and Lys470. Residues Pro473, Pro482, Pro497, Pro506, Pro512, and Pro518 each carry the hydroxyproline modification. The residue at position 527 (Lys527) is a 5-hydroxylysine. Pro530 bears the Hydroxyproline mark. Lys542 carries the post-translational modification 5-hydroxylysine. Residues Pro551, Pro557, Pro566, Pro581, Pro587, Pro590, Pro599, and Pro605 each carry the hydroxyproline modification. The residue at position 608 (Lys608) is a 5-hydroxylysine. O-linked (Gal...) hydroxylysine glycosylation is present at Lys608. Pro614 is subject to Hydroxyproline. Lys620 is subject to 5-hydroxylysine. Lys620 carries O-linked (Gal...) hydroxylysine glycosylation. A compositionally biased stretch (low complexity) spans 622-631 (LPGAPGLRGL). 6 positions are modified to hydroxyproline: Pro623, Pro626, Pro632, Pro644, Pro659, and Pro668. A compositionally biased stretch (low complexity) spans 656–667 (QGAPGPSGFQGL). Residue Pro670 is modified to 3-hydroxyproline. A hydroxyproline mark is found at Pro671 and Pro674. A compositionally biased stretch (low complexity) spans 721-736 (LPGTPGTDGPKGAAGP). The span at 764–775 (KGDRGDVGEKGP) shows a compositional bias: basic and acidic residues. Composition is skewed to low complexity over residues 833-848 (AGFA…PGAK) and 877-913 (PTGV…SNGN). Pro907 carries the 3-hydroxyproline modification. Pro908, Pro914, and Pro920 each carry 4-hydroxyproline. Residues 1069 to 1079 (APGPPGSPGPA) show a composition bias toward pro residues. The segment covering 1091-1109 (AGAQGPMGPAGPAGARGMP) has biased composition (low complexity). Basic and acidic residues predominate over residues 1115 to 1129 (RGDKGETGEAGERGL). Position 1130 is a 5-hydroxylysine (Lys1130). Lys1130 carries O-linked (Gal...) hydroxylysine glycosylation. Position 1144 is a 3-hydroxyproline (Pro1144). Low complexity predominate over residues 1148-1157 (SGDQGASGPA). At Pro1181 the chain carries 4-hydroxyproline. Pro1186 bears the 3-hydroxyproline mark. Pro1187 bears the 4-hydroxyproline mark. Residues 1199–1216 (AGPPGNPGPPGPPGPPGP) show a composition bias toward pro residues. A 3-hydroxyproline modification is found at Pro1201. 4-hydroxyproline occurs at positions 1202 and 1205. Pro1207 bears the 3-hydroxyproline mark. A 4-hydroxyproline mark is found at Pro1208 and Pro1211. At Pro1213 the chain carries 3-hydroxyproline. Pro1214 carries the 4-hydroxyproline modification. Residues 1215-1241 (GPGIDMSAFAGLGQREKGPDPLQYMRA) form a nonhelical region (C-terminal) region. In terms of domain architecture, Fibrillar collagen NC1 spans 1253-1487 (AEVDATLKSL…GVDIGPVCFL (235 aa)). Disulfide bonds link Cys1283/Cys1315, Cys1323/Cys1485, and Cys1393/Cys1438. Positions 1301, 1303, 1304, 1306, and 1309 each coordinate Ca(2+). Residue Asn1388 is glycosylated (N-linked (GlcNAc...) asparagine).

This sequence belongs to the fibrillar collagen family. Homotrimers of alpha 1(II) chains. Post-translationally, probably 3-hydroxylated on prolines by LEPREL1. Proline residues at the third position of the tripeptide repeating unit (G-X-P) are hydroxylated in some or all of the chains. Proline residues at the second position of the tripeptide repeating unit (G-P-X) are hydroxylated in some of the chains. O-linked glycans consist of Glc-Gal disaccharides bound to the oxygen atom of post-translationally added hydroxyl groups. In terms of processing, contains mostly 4-hydroxyproline. Prolines at the third position of the tripeptide repeating unit (G-X-P) are 4-hydroxylated in some or all of the chains. Post-translationally, contains 3-hydroxyproline at a few sites. This modification occurs on the first proline residue in the sequence motif Gly-Pro-Hyp, where Hyp is 4-hydroxyproline. Lysine residues at the third position of the tripeptide repeating unit (G-X-Y) are 5-hydroxylated in some or all of the chains. In terms of processing, O-glycosylated on hydroxylated lysine residues. The O-linked glycan consists of a Glc-Gal disaccharide.

The protein resides in the secreted. It is found in the extracellular space. Its subcellular location is the extracellular matrix. Functionally, type II collagen is specific for cartilaginous tissues. It is essential for the normal embryonic development of the skeleton, for linear growth and for the ability of cartilage to resist compressive forces. The protein is Collagen alpha-1(II) chain of Bos taurus (Bovine).